Here is a 137-residue protein sequence, read N- to C-terminus: Small ribosomal subunit protein uS9 (137 aa).

A disordered region spans residues 118–137 (KERKKYGLRKARKAPQYSKR).

This sequence belongs to the universal ribosomal protein uS9 family.

This chain is Small ribosomal subunit protein uS9, found in Acaryochloris marina (strain MBIC 11017).